Here is a 120-residue protein sequence, read N- to C-terminus: Small ribosomal subunit protein uS12 (120 aa).

D88 is modified (3-methylthioaspartic acid).

The protein belongs to the universal ribosomal protein uS12 family. In terms of assembly, part of the 30S ribosomal subunit. Contacts proteins S8 and S17. May interact with IF1 in the 30S initiation complex.

Functionally, with S4 and S5 plays an important role in translational accuracy. In terms of biological role, interacts with and stabilizes bases of the 16S rRNA that are involved in tRNA selection in the A site and with the mRNA backbone. Located at the interface of the 30S and 50S subunits, it traverses the body of the 30S subunit contacting proteins on the other side and probably holding the rRNA structure together. The combined cluster of proteins S8, S12 and S17 appears to hold together the shoulder and platform of the 30S subunit. The sequence is that of Small ribosomal subunit protein uS12 from Carsonella ruddii (strain PV).